Consider the following 140-residue polypeptide: CBS domain-containing protein YhcV (140 aa).

2 CBS domains span residues 8-64 and 72-127; these read MTTQ…GRDG and MSTE…NESA.

In Bacillus subtilis (strain 168), this protein is CBS domain-containing protein YhcV (yhcV).